Consider the following 432-residue polypeptide: 3-phosphoshikimate 1-carboxyvinyltransferase (432 aa).

Residues K23, S24, and R28 each contribute to the 3-phosphoshikimate site. Residue K23 coordinates phosphoenolpyruvate. Residues G95 and R123 each coordinate phosphoenolpyruvate. Residues S167, Q169, D317, and K344 each coordinate 3-phosphoshikimate. Q169 contributes to the phosphoenolpyruvate binding site. D317 acts as the Proton acceptor in catalysis. The phosphoenolpyruvate site is built by R348 and R390.

Belongs to the EPSP synthase family. In terms of assembly, monomer.

It is found in the cytoplasm. It catalyses the reaction 3-phosphoshikimate + phosphoenolpyruvate = 5-O-(1-carboxyvinyl)-3-phosphoshikimate + phosphate. Its pathway is metabolic intermediate biosynthesis; chorismate biosynthesis; chorismate from D-erythrose 4-phosphate and phosphoenolpyruvate: step 6/7. Its function is as follows. Catalyzes the transfer of the enolpyruvyl moiety of phosphoenolpyruvate (PEP) to the 5-hydroxyl of shikimate-3-phosphate (S3P) to produce enolpyruvyl shikimate-3-phosphate and inorganic phosphate. This is 3-phosphoshikimate 1-carboxyvinyltransferase from Staphylococcus aureus (strain N315).